The chain runs to 601 residues: Glutathione-regulated potassium-efflux system protein KefB (601 aa).

Transmembrane regions (helical) follow at residues Ser4 to Ala24, Ile29 to Phe49, Glu55 to Leu75, Ile87 to Met107, Ala115 to Met135, Val152 to Gly172, His177 to Gly197, Phe207 to Gly227, Leu230 to Leu250, Gly268 to Tyr288, Leu291 to Leu311, Phe326 to Ser346, and Ala356 to Ile376. The 120-residue stretch at Lys400–Thr519 folds into the RCK N-terminal domain.

Belongs to the monovalent cation:proton antiporter 2 (CPA2) transporter (TC 2.A.37) family. KefB subfamily. In terms of assembly, interacts with the regulatory subunit KefG.

Its subcellular location is the cell inner membrane. In terms of biological role, pore-forming subunit of a potassium efflux system that confers protection against electrophiles. Catalyzes K(+)/H(+) antiport. The protein is Glutathione-regulated potassium-efflux system protein KefB of Klebsiella pneumoniae (strain 342).